Here is a 71-residue protein sequence, read N- to C-terminus: Small ribosomal subunit protein bS21 (71 aa).

Belongs to the bacterial ribosomal protein bS21 family.

The sequence is that of Small ribosomal subunit protein bS21 from Photobacterium profundum (strain SS9).